The following is a 706-amino-acid chain: MNQELLSVGSKRRRTGGSLRGNPSSSQADEEQMNRVLEEEQQQPRHQEEEHAARNGEVVGAEPRPGDQNDPQQGQLEENNNRFISVDEDSSGNQEEQEEDEEHAGEQDEEDEEEEEMDQESDDFDQSDDSSREDEHTHRNSVTNSNSIVDLPIHQRSSPFYTKTTKMKRKLDHGSEVRSFSLGKKPCKVSEYTSTTGLVPCSATPTTFGDLRAANGQGQQRRRITSVQPPTGLQEWLKMFQSWSGPEKLLALDELIDSCEPTQVKHMMQVIEPQFQRDFISLLPKELALYVLSFLEPKDLLQAAQTCRYWRILAEDNLLWREKCKEEGIDEPLHIKRRKVIKPGFIHSPWKSAYIRQHRIDTNWRRGELKSPKVLKGHDDHVITCLQFCGNRIVSGSDDNTLKVWSAVTGKCLRTLVGHTGGVWSSQMRDNIIISGSTDRTLKVWNAETGECIHTLYGHTSTVRCMHLHEKRVVSGSRDATLRVWDIETGQCLHVLMGHVAAVRCVQYDGRRVVSGAYDFMVKVWDPETETCLHTLQGHTNRVYSLQFDGIHVVSGSLDTSIRVWDVETGNCIHTLTGHQSLTSGMELKDNILVSGNADSTVKIWDIKTGQCLQTLQGPNKHQSAVTCLQFNKNFVITSSDDGTVKLWDLKTGEFIRNLVTLESGGSGGVVWRIRASNTKLVCAVGSRNGTEETKLLVLDFDVDMK.

The segment at 1–157 (MNQELLSVGS…IVDLPIHQRS (157 aa)) is disordered. Ser26 is subject to Phosphoserine. Residues 32–54 (QMNRVLEEEQQQPRHQEEEHAAR) are compositionally biased toward basic and acidic residues. The segment covering 69–83 (NDPQQGQLEENNNRF) has biased composition (polar residues). Residues 86–128 (VDEDSSGNQEEQEEDEEHAGEQDEEDEEEEEMDQESDDFDQSD) are compositionally biased toward acidic residues. Basic and acidic residues predominate over residues 129 to 138 (DSSREDEHTH). At Thr204 the chain carries Phosphothreonine. Ser226 bears the Phosphoserine mark. Positions 277–323 (RDFISLLPKELALYVLSFLEPKDLLQAAQTCRYWRILAEDNLLWREK) constitute an F-box domain. WD repeat units lie at residues 377–417 (GHDD…RTLV), 419–455 (HTGGVWSSQMRDNIIISGSTDRTLKVWNAETGECIHT), 458–497 (GHTSTVRCMHLHEKRVVSGSRDATLRVWDIETGQCLHVLM), 499–535 (HVAAVRCVQYDGRRVVSGAYDFMVKVWDPETETCLHT), 538–577 (GHTNRVYSLQFDGIHVVSGSLDTSIRVWDVETGNCIHTLT), 579–617 (HQSLTSGMELKDNILVSGNADSTVKIWDIKTGQCLQTLQ), and 621–658 (KHQSAVTCLQFNKNFVITSSDDGTVKLWDLKTGEFIRN).

As to quaternary structure, homodimer; homodimerization plays a role in substrate binding and/or ubiquitination and degradation. Component of the SCF(FBXW7) complex consisting of CUL1, RBX1, SKP1 and FBXW7. Interacts (via F-box domain) with SKP1. Interacts (via F-box domain) with pseudophosphatase STYX; the interaction is direct and prevents FBXW7 interaction with SKP1. Interacts with cyclin-E (CCNE1 or CCNE2). Interacts with PSEN1. Forms a trimeric complex with NOTCH1 and SGK1. Interacts with NOTCH1 intracellular domain/NICD and NOTCH4 intracellular domain/NICD. Interacts with NOTCH2 intracellular domain (N2ICD). Interacts with MYC (when phosphorylated). Interacts with USP28, counteracting ubiquitination of MYC. Interacts with JUN. Found in a complex with JUN and PRR7. Interacts with JUN and PRR7; the interaction inhibits ubiquitination-mediated JUN degradation, promoting its phosphorylation and transcriptional activity. Interacts (when phosphorylated at Thr-204) with PIN1, disrupting FBXW7 dimerization and promoting FBXW7 autoubiquitination and degradation. Interacts with UBE2QL1. Interacts with FAM83D; promotes FBXW7 degradation. Interacts with MYCN; FBXW7 competes with AURKA for binding to unphosphorylated MYCN but not for binding to phosphorylated MYCN. Interacts with STOML1. Interacts with NFE2L1. Interacts with USP36, counteracting ubiquitination of MYC. Interacts with RICTOR; mediates RICTOR ubiquitination and degradation.l Interacts with USP38, counteracting ubiquitination of MYC. In terms of assembly, (Microbial infection) In case of infection, interacts with T.annulata PIN1 (TaPIN1); leading to FBXW7 autoubiquitination and subsequent degradation: FBXW7 degradation promotes stabilization of JUN, which promotes cell transformation. Post-translationally, phosphorylation at Thr-204 promotes interaction with PIN1, leading to disrupt FBXW7 dimerization and promoting FBXW7 autoubiquitination and degradation. Phosphorylated by ATM at Ser-26 in response to DNA damage, promoting recruitment to DNA damage sites and 'Lys-63'-linked ubiquitination of phosphorylated XRCC4. Ubiquitinated: autoubiquitinates following phosphorylation at Thr-204 and subsequent interaction with PIN1. Ubiquitination leads to its degradation.

It localises to the nucleus. Its subcellular location is the nucleoplasm. It is found in the chromosome. The protein operates within protein modification; protein ubiquitination. Functionally, substrate recognition component of a SCF (SKP1-CUL1-F-box protein) E3 ubiquitin-protein ligase complex which mediates the ubiquitination and subsequent proteasomal degradation of target proteins. Recognizes and binds phosphorylated sites/phosphodegrons within target proteins and thereafter brings them to the SCF complex for ubiquitination. Identified substrates include cyclin-E (CCNE1 or CCNE2), DISC1, JUN, MYC, NOTCH1 released notch intracellular domain (NICD), NOTCH2, MCL1, MLST8, RICTOR, and probably PSEN1. Acts as a negative regulator of JNK signaling by binding to phosphorylated JUN and promoting its ubiquitination and subsequent degradation. SCF(FBXW7) complex mediates the ubiquitination and subsequent degradation of NFE2L1. Involved in bone homeostasis and negative regulation of osteoclast differentiation. Also able to promote 'Lys-63'-linked ubiquitination in response to DNA damage. The SCF(FBXW7) complex facilitates double-strand break repair following phosphorylation by ATM: phosphorylation promotes localization to sites of double-strand breaks and 'Lys-63'-linked ubiquitination of phosphorylated XRCC4, enhancing DNA non-homologous end joining. The protein is F-box/WD repeat-containing protein 7 of Bos taurus (Bovine).